Here is a 429-residue protein sequence, read N- to C-terminus: MNFSESERLQQLSNEYILGGVNSPSRSYKAVGGGAPVVMKEGHGAYLYDVDGNKFIDYLQAYGPIITGHAHPHITKAIQEQAAKGVLFGTPTELEIEFSKKLRDAIPSLEKIRFVNSGTEAVMTTIRVARAYTKRNKIIKFAGSYHGHSDLVLVAAGSGPSQLGSPDSAGVPESVAREVITVPFNDINAYKEAIEFWGDEIAAVLVEPIVGNFGMVMPQPGFLEEVNEISHSNGTLVIYDEVITAFRFHYGAAQDLLGVIPDLTAFGKIVGGGLPIGGYGGRQDIMEQVAPLGPAYQAGTMAGNPLSMKAGIALLEVLEQDGVYEKLDSLGQQLEEGLLKLIEKHNITATINRIYGSLTLYFTDEKVTHYDQVEHSDGEAFGKFFKLMLNQGINLAPSKFEAWFLTTEHTEEDIKQTLKAADYAFSQMK.

Residue Lys-268 is modified to N6-(pyridoxal phosphate)lysine.

The protein belongs to the class-III pyridoxal-phosphate-dependent aminotransferase family. HemL subfamily. As to quaternary structure, homodimer. Pyridoxal 5'-phosphate serves as cofactor.

Its subcellular location is the cytoplasm. The catalysed reaction is (S)-4-amino-5-oxopentanoate = 5-aminolevulinate. Its pathway is porphyrin-containing compound metabolism; protoporphyrin-IX biosynthesis; 5-aminolevulinate from L-glutamyl-tRNA(Glu): step 2/2. In Staphylococcus aureus (strain MRSA252), this protein is Glutamate-1-semialdehyde 2,1-aminomutase 2.